A 619-amino-acid polypeptide reads, in one-letter code: Chaperone protein HscA homolog (619 aa).

This sequence belongs to the heat shock protein 70 family.

Chaperone involved in the maturation of iron-sulfur cluster-containing proteins. Has a low intrinsic ATPase activity which is markedly stimulated by HscB. The chain is Chaperone protein HscA homolog from Haemophilus influenzae (strain PittGG).